We begin with the raw amino-acid sequence, 63 residues long: Cytochrome b-c1 complex subunit 9 (63 aa).

The Mitochondrial matrix segment spans residues 2–21; the sequence is AAATLTSKLYSLLFRRTSTF. A helical membrane pass occupies residues 22–47; the sequence is ALTIIVGVMFFERAFDQGADAIYDHI. The Mitochondrial intermembrane portion of the chain corresponds to 48 to 63; sequence NEGKLWKHIKHKYENK.

It belongs to the UQCR10/QCR9 family. As to quaternary structure, component of the ubiquinol-cytochrome c oxidoreductase (cytochrome b-c1 complex, complex III, CIII), a multisubunit enzyme composed of 11 subunits. The complex is composed of 3 respiratory subunits cytochrome b, cytochrome c1 and Rieske protein UQCRFS1, 2 core protein subunits UQCRC1/QCR1 and UQCRC2/QCR2, and 6 low-molecular weight protein subunits UQCRH/QCR6, UQCRB/QCR7, UQCRQ/QCR8, UQCR10/QCR9, UQCR11/QCR10 and subunit 9, the cleavage product of Rieske protein UQCRFS1. The complex exists as an obligatory dimer and forms supercomplexes (SCs) in the inner mitochondrial membrane with NADH-ubiquinone oxidoreductase (complex I, CI) and cytochrome c oxidase (complex IV, CIV), resulting in different assemblies (supercomplex SCI(1)III(2)IV(1) and megacomplex MCI(2)III(2)IV(2)). Interacts with STMP1.

The protein resides in the mitochondrion inner membrane. Component of the ubiquinol-cytochrome c oxidoreductase, a multisubunit transmembrane complex that is part of the mitochondrial electron transport chain which drives oxidative phosphorylation. The respiratory chain contains 3 multisubunit complexes succinate dehydrogenase (complex II, CII), ubiquinol-cytochrome c oxidoreductase (cytochrome b-c1 complex, complex III, CIII) and cytochrome c oxidase (complex IV, CIV), that cooperate to transfer electrons derived from NADH and succinate to molecular oxygen, creating an electrochemical gradient over the inner membrane that drives transmembrane transport and the ATP synthase. The cytochrome b-c1 complex catalyzes electron transfer from ubiquinol to cytochrome c, linking this redox reaction to translocation of protons across the mitochondrial inner membrane, with protons being carried across the membrane as hydrogens on the quinol. In the process called Q cycle, 2 protons are consumed from the matrix, 4 protons are released into the intermembrane space and 2 electrons are passed to cytochrome c. The polypeptide is Cytochrome b-c1 complex subunit 9 (UQCR10) (Homo sapiens (Human)).